The sequence spans 617 residues: Actin-binding protein (617 aa).

An ADF-H domain is found at 7 to 136 (DATTHSRDIE…DEEELLTKIS (130 aa)). 2 disordered regions span residues 169–223 (PSLA…LSDN) and 325–574 (AEKK…GEDN). A 1-1 repeat occupies 202-211 (ADDWDEPEIK). The segment at 202-600 (ADDWDEPEIK…DDDWWLGELE (399 aa)) is 3 X 10 AA approximate repeats. 2 stretches are compositionally biased toward basic and acidic residues: residues 340-351 (EEQKPVETKTEI) and 359-375 (DEMK…KLGA). The segment covering 400 to 411 (TFGQPAANSKPA) has biased composition (polar residues). Composition is skewed to acidic residues over residues 437–453 (EHEE…DEDE), 483–502 (EPVE…EEEA), and 516–530 (PEPE…EEEA). A run of 4 repeats spans residues 444 to 453 (DDDWGEDEDE), 495 to 510 (EEEE…LPSR), 523 to 538 (EEEE…LPSR), and 591 to 600 (DDDWWLGELE). A 2 X 16 AA repeats of E(7)-A-P-A-P-S-L-P-S-R region spans residues 495–538 (EEEEEEEAPAPSLPSRNAAPEPEPEQPQEEEEEEEAPAPSLPSR). Positions 557-617 (AEAPWATAEY…FPSNYVVLGN (61 aa)) constitute an SH3 domain.

The protein localises to the cytoplasm. Its subcellular location is the cytoskeleton. In terms of biological role, may be involved in the spatial organization of cell surface growth. An overproduction of ABP1 causes the assembly of the cortical actin skeleton at inappropriate sites on the cell surface, resulting in delocalized surface growth. This Maudiozyma exigua (Yeast) protein is Actin-binding protein (ABP1).